The chain runs to 1002 residues: Ephrin type-B receptor 5 (1002 aa).

The first 29 residues, 1 to 29 (MDSNADISARRVSGMDWLWLVCFFHLVTS), serve as a signal peptide directing secretion. Residues 30–564 (LEEILLDTTG…AQDRLPLIVG (535 aa)) lie on the Extracellular side of the membrane. The region spanning 31–213 (EEILLDTTGE…FFYKCPAVVK (183 aa)) is the Eph LBD domain. 2 consecutive Fibronectin type-III domains span residues 344 to 452 (APRD…TSQS) and 453 to 548 (VPSA…TLMA). A glycan (N-linked (GlcNAc...) asparagine) is linked at Asn-446. Residues 565 to 585 (SALGGLAFLVIAAIAILAIIF) form a helical membrane-spanning segment. Over 586–1002 (KSKRRETPYT…HLNQLEPVEV (417 aa)) the chain is Cytoplasmic. The region spanning 637 to 900 (IKIEEVIGSG…QIVSALDKMI (264 aa)) is the Protein kinase domain. Residues 643–651 (IGSGEFGEV) and Lys-669 each bind ATP. Asp-762 serves as the catalytic Proton acceptor. Residues 906 to 928 (LKATGTGSSRPSQPLLSNSPPDF) are disordered. The span at 910 to 928 (GTGSSRPSQPLLSNSPPDF) shows a compositional bias: polar residues. One can recognise an SAM domain in the interval 929–993 (PSLSNAHEWL…LNSIQLMKVH (65 aa)). The PDZ-binding motif lies at 1000–1002 (VEV).

This sequence belongs to the protein kinase superfamily. Tyr protein kinase family. Ephrin receptor subfamily. Most abundant in thymus and detectable in brain, retina, kidney, lung and heart. Not detected in skeletal muscle and liver.

The protein localises to the membrane. The catalysed reaction is L-tyrosyl-[protein] + ATP = O-phospho-L-tyrosyl-[protein] + ADP + H(+). Functionally, receptor for members of the ephrin-B family. This chain is Ephrin type-B receptor 5 (EPHB5), found in Gallus gallus (Chicken).